The sequence spans 198 residues: Holliday junction branch migration complex subunit RuvA (198 aa).

The domain I stretch occupies residues 1–63 (MYDYIKGQLT…EDAHLLFGFH (63 aa)). The interval 64–142 (TEDEKDVFLK…EAPQETGNTK (79 aa)) is domain II. Residues 143 to 147 (ARSNK) form a flexible linker region. A domain III region spans residues 148-198 (AGNTQLDEAIEALLALGYKATELKKIRAFFEGTSETAEQYIKSALKLLMKG).

It belongs to the RuvA family. In terms of assembly, homotetramer. Forms an RuvA(8)-RuvB(12)-Holliday junction (HJ) complex. HJ DNA is sandwiched between 2 RuvA tetramers; dsDNA enters through RuvA and exits via RuvB. An RuvB hexamer assembles on each DNA strand where it exits the tetramer. Each RuvB hexamer is contacted by two RuvA subunits (via domain III) on 2 adjacent RuvB subunits; this complex drives branch migration. In the full resolvosome a probable DNA-RuvA(4)-RuvB(12)-RuvC(2) complex forms which resolves the HJ.

The protein resides in the cytoplasm. In terms of biological role, the RuvA-RuvB-RuvC complex processes Holliday junction (HJ) DNA during genetic recombination and DNA repair, while the RuvA-RuvB complex plays an important role in the rescue of blocked DNA replication forks via replication fork reversal (RFR). RuvA specifically binds to HJ cruciform DNA, conferring on it an open structure. The RuvB hexamer acts as an ATP-dependent pump, pulling dsDNA into and through the RuvAB complex. HJ branch migration allows RuvC to scan DNA until it finds its consensus sequence, where it cleaves and resolves the cruciform DNA. The protein is Holliday junction branch migration complex subunit RuvA of Streptococcus pyogenes serotype M12 (strain MGAS2096).